A 203-amino-acid chain; its full sequence is Protein GrpE (203 aa).

Belongs to the GrpE family. As to quaternary structure, homodimer.

The protein resides in the cytoplasm. Its function is as follows. Participates actively in the response to hyperosmotic and heat shock by preventing the aggregation of stress-denatured proteins, in association with DnaK and GrpE. It is the nucleotide exchange factor for DnaK and may function as a thermosensor. Unfolded proteins bind initially to DnaJ; upon interaction with the DnaJ-bound protein, DnaK hydrolyzes its bound ATP, resulting in the formation of a stable complex. GrpE releases ADP from DnaK; ATP binding to DnaK triggers the release of the substrate protein, thus completing the reaction cycle. Several rounds of ATP-dependent interactions between DnaJ, DnaK and GrpE are required for fully efficient folding. This is Protein GrpE from Pseudoalteromonas translucida (strain TAC 125).